The primary structure comprises 392 residues: Galactokinase (392 aa).

The alpha-D-galactose site is built by Arg-37, Glu-43, His-44, and Asp-46. ATP contacts are provided by Gly-136, Gly-138, Ser-140, and Ser-141. Asp-186 lines the alpha-D-galactose pocket. Catalysis depends on Asp-186, which acts as the Proton acceptor. Residue Ser-230 is modified to Phosphoserine. Tyr-236 is an alpha-D-galactose binding site.

This sequence belongs to the GHMP kinase family. GalK subfamily. In terms of assembly, homodimer.

It carries out the reaction alpha-D-galactose + ATP = alpha-D-galactose 1-phosphate + ADP + H(+). Its pathway is carbohydrate metabolism; galactose metabolism. Functionally, catalyzes the transfer of a phosphate from ATP to alpha-D-galactose and participates in the first committed step in the catabolism of galactose. This is Galactokinase (Galk1) from Mus musculus (Mouse).